Here is a 156-residue protein sequence, read N- to C-terminus: Small ribosomal subunit protein uS17A (156 aa).

S2 is subject to N-acetylserine. Glycyl lysine isopeptide (Lys-Gly) (interchain with G-Cter in ubiquitin) cross-links involve residues K15, K46, K56, K57, K79, K96, K105, K133, K141, and K148.

Belongs to the universal ribosomal protein uS17 family. Component of the small ribosomal subunit (SSU). Mature yeast ribosomes consist of a small (40S) and a large (60S) subunit. The 40S small subunit contains 1 molecule of ribosomal RNA (18S rRNA) and 33 different proteins (encoded by 57 genes). The large 60S subunit contains 3 rRNA molecules (25S, 5.8S and 5S rRNA) and 46 different proteins (encoded by 81 genes). Post-translationally, N-terminally acetylated by acetyltransferase NatA.

It is found in the cytoplasm. Functionally, component of the ribosome, a large ribonucleoprotein complex responsible for the synthesis of proteins in the cell. The small ribosomal subunit (SSU) binds messenger RNAs (mRNAs) and translates the encoded message by selecting cognate aminoacyl-transfer RNA (tRNA) molecules. The large subunit (LSU) contains the ribosomal catalytic site termed the peptidyl transferase center (PTC), which catalyzes the formation of peptide bonds, thereby polymerizing the amino acids delivered by tRNAs into a polypeptide chain. The nascent polypeptides leave the ribosome through a tunnel in the LSU and interact with protein factors that function in enzymatic processing, targeting, and the membrane insertion of nascent chains at the exit of the ribosomal tunnel. This Saccharomyces cerevisiae (strain ATCC 204508 / S288c) (Baker's yeast) protein is Small ribosomal subunit protein uS17A.